An 872-amino-acid chain; its full sequence is Metabotropic glutamate receptor 2 (872 aa).

A signal peptide spans 1–18 (MESLLRFLALLLLRGAVA). Over 19-568 (EGPAKKVLTL…EYIRWGDAWA (550 aa)) the chain is Extracellular. Cys50 and Cys92 form a disulfide bridge. Arg57, Arg61, Ser145, Ala166, and Thr168 together coordinate L-glutamate. N-linked (GlcNAc...) asparagine glycosylation is found at Asn203 and Asn286. 7 disulfides stabilise this stretch: Cys234-Cys518, Cys355-Cys362, Cys400-Cys407, Cys500-Cys519, Cys504-Cys522, Cys525-Cys537, and Cys540-Cys553. An L-glutamate-binding site is contributed by Asp295. Asn338 carries an N-linked (GlcNAc...) asparagine glycan. An L-glutamate-binding site is contributed by Lys377. Asn402 carries N-linked (GlcNAc...) asparagine glycosylation. Asn547 is a glycosylation site (N-linked (GlcNAc...) asparagine). The helical transmembrane segment at 569-589 (VGPVTIACLGALATLFVLGVF) threads the bilayer. At 590 to 604 (VRHNATPVVKASGRE) the chain is on the cytoplasmic side. A helical transmembrane segment spans residues 605–625 (LCYILLGGVFLCYCMTFIFIA). At 626–633 (KPSTAVCT) the chain is on the extracellular side. Cysteines 632 and 721 form a disulfide. Residues 634–651 (LRRLGLGTAFSVCYSALL) form a helical membrane-spanning segment. At 652-679 (TKTNRIARIFGGAREGAQRPRFISPASQ) the chain is on the cytoplasmic side. The important for interaction with HTR2A stretch occupies residues 677 to 685 (ASQVAICLA). The chain crosses the membrane as a helical span at residues 680 to 700 (VAICLALISGQLLIVAAWLVV). Topologically, residues 701–726 (EAPGIGKETAPERREVVTLRCNHRDA) are extracellular. The chain crosses the membrane as a helical span at residues 727 to 747 (SMLGSLAYNVLLIALCTLYAF). Over 748–760 (KTRKCPENFNEAK) the chain is Cytoplasmic. Residues 761 to 781 (FIGFTMYTTCIIWLAFLPIFY) form a helical membrane-spanning segment. Residues 782-798 (VTSSDYRVQTTTMCVSV) lie on the Extracellular side of the membrane. The chain crosses the membrane as a helical span at residues 799–819 (SLSGSVVLGCLFAPKLHIILF). The Cytoplasmic portion of the chain corresponds to 820–872 (QPQKNVVSHRAPTSRFGSAAPRASANLGQGSGSQLVPTVCNGREVVDSTTSSL).

Belongs to the G-protein coupled receptor 3 family. As to quaternary structure, forms heterodimers with GRM3 or GRM4. Interacts with GNAI1. Interacts with TAMALIN. Interacts with HTR2A. In terms of tissue distribution, detected in neurons in brain cortex (at protein level).

The protein resides in the cell membrane. It localises to the synapse. The protein localises to the cell projection. Its subcellular location is the dendrite. In terms of biological role, dimeric G protein-coupled receptor which is activated by the excitatory neurotransmitter L-glutamate. Plays critical roles in modulating synaptic transmission and neuronal excitability. Upon activation by glutamate, inhibits presynaptic calcium channels, reducing further glutamate release and dampening excitatory signaling. Mechanistically, ligand binding causes a conformation change that triggers signaling via guanine nucleotide-binding proteins (G proteins) and modulates the activity of down-stream effectors, such as adenylate cyclase. May mediate suppression of neurotransmission or may be involved in synaptogenesis or synaptic stabilization. In Mus musculus (Mouse), this protein is Metabotropic glutamate receptor 2 (Grm2).